We begin with the raw amino-acid sequence, 222 residues long: UPF0758 protein Lcho_0695 (222 aa).

The region spanning 100-222 (VFDSPQAVRD…VVSFAERGLL (123 aa)) is the MPN domain. 3 residues coordinate Zn(2+): H171, H173, and D184. Residues 171-184 (HNHPSGVAEPSRAD) carry the JAMM motif motif.

Belongs to the UPF0758 family.

This is UPF0758 protein Lcho_0695 from Leptothrix cholodnii (strain ATCC 51168 / LMG 8142 / SP-6) (Leptothrix discophora (strain SP-6)).